Here is a 306-residue protein sequence, read N- to C-terminus: Ornithine carbamoyltransferase (306 aa).

Carbamoyl phosphate is bound by residues 51–54, glutamine 78, arginine 102, and 129–132; these read STRT and HPCQ. L-ornithine-binding positions include asparagine 160, aspartate 223, and 227 to 228; that span reads SM. Carbamoyl phosphate-binding positions include 263–264 and arginine 291; that span reads CL.

This sequence belongs to the aspartate/ornithine carbamoyltransferase superfamily. OTCase family.

The protein localises to the cytoplasm. The catalysed reaction is carbamoyl phosphate + L-ornithine = L-citrulline + phosphate + H(+). Its pathway is amino-acid biosynthesis; L-arginine biosynthesis; L-arginine from L-ornithine and carbamoyl phosphate: step 1/3. Functionally, reversibly catalyzes the transfer of the carbamoyl group from carbamoyl phosphate (CP) to the N(epsilon) atom of ornithine (ORN) to produce L-citrulline. This Trichormus variabilis (strain ATCC 29413 / PCC 7937) (Anabaena variabilis) protein is Ornithine carbamoyltransferase.